The primary structure comprises 329 residues: RING finger protein 225 (329 aa).

Residues 1-55 (MPCPRPFWLRHSRAPQGSGPSSPGSLSAPRSPSRGEDQEEEEEEEGDGSPGSGPI) form a disordered region. Low complexity predominate over residues 14–32 (APQGSGPSSPGSLSAPRSP). Positions 37 to 47 (DQEEEEEEEGD) are enriched in acidic residues. Residues 64–112 (CLICVSSFDGVFKLPKRLDCGHVFCLECLARLSLATAGGGNAVACPVCR) form an RING-type zinc finger. The interval 122–181 (GLPALPTQSGLLPRDARAPPSRQGSVRFDRRRGLLYLRPPPPPPGPRKARAPPPPPPLRL) is disordered. The segment covering 159–179 (RPPPPPPGPRKARAPPPPPPL) has biased composition (pro residues). Residues 203 to 223 (ALAVLVAAGLVVSGVYIFFLI) traverse the membrane as a helical segment. The interval 248-329 (FPPRPPPGSP…RGARRLWGSQ (82 aa)) is disordered. Over residues 281-293 (DALEPEAGPEDPA) the composition is skewed to acidic residues. Over residues 294–304 (EAERTLDRRSD) the composition is skewed to basic and acidic residues.

Its subcellular location is the membrane. This chain is RING finger protein 225, found in Homo sapiens (Human).